We begin with the raw amino-acid sequence, 663 residues long: Oxytetracycline resistance protein (663 aa).

Positions 1-252 constitute a tr-type G domain; sequence MNKLNLGILA…GIRELLPSVH (252 aa). Residues 10 to 17, 74 to 78, and 128 to 131 contribute to the GTP site; these read AHVDAGKT, DTPGH, and NKID.

This sequence belongs to the TRAFAC class translation factor GTPase superfamily. Classic translation factor GTPase family. TetM/TetO subfamily.

Abolishes the inhibitory effect of oxytetracycline on protein synthesis by a non-covalent modification of the ribosomes. The protein is Oxytetracycline resistance protein (otrA) of Streptomyces rimosus.